We begin with the raw amino-acid sequence, 65 residues long: Small ribosomal subunit protein bS21 (65 aa).

Positions V43–A65 are disordered. Residues K48–Q57 show a composition bias toward basic residues.

Belongs to the bacterial ribosomal protein bS21 family.

The chain is Small ribosomal subunit protein bS21 from Chloroherpeton thalassium (strain ATCC 35110 / GB-78).